Consider the following 284-residue polypeptide: D-tagatose-1,6-bisphosphate aldolase subunit GatY (284 aa).

Residue D82 is the Proton donor of the active site. Zn(2+) is bound by residues H83 and H180. Residue G181 coordinates dihydroxyacetone phosphate. H208 contacts Zn(2+). Residues 209–211 (GAS) and 230–233 (NVAT) contribute to the dihydroxyacetone phosphate site.

Belongs to the class II fructose-bisphosphate aldolase family. TagBP aldolase GatY subfamily. In terms of assembly, forms a complex with GatZ. It depends on Zn(2+) as a cofactor.

It catalyses the reaction D-tagatofuranose 1,6-bisphosphate = D-glyceraldehyde 3-phosphate + dihydroxyacetone phosphate. It participates in carbohydrate metabolism; D-tagatose 6-phosphate degradation; D-glyceraldehyde 3-phosphate and glycerone phosphate from D-tagatose 6-phosphate: step 2/2. Its function is as follows. Catalytic subunit of the tagatose-1,6-bisphosphate aldolase GatYZ, which catalyzes the reversible aldol condensation of dihydroxyacetone phosphate (DHAP or glycerone-phosphate) with glyceraldehyde 3-phosphate (G3P) to produce tagatose 1,6-bisphosphate (TBP). Requires GatZ subunit for full activity and stability. Is involved in the catabolism of galactitol. This Shigella sonnei (strain Ss046) protein is D-tagatose-1,6-bisphosphate aldolase subunit GatY.